A 1161-amino-acid polypeptide reads, in one-letter code: DNA-directed RNA polymerase subunit beta' (1161 aa).

Zn(2+)-binding residues include C60, C62, C75, and C78. The Mg(2+) site is built by D449, D451, and D453. 4 residues coordinate Zn(2+): C790, C864, C871, and C874.

It belongs to the RNA polymerase beta' chain family. As to quaternary structure, the RNAP catalytic core consists of 2 alpha, 1 beta, 1 beta' and 1 omega subunit. When a sigma factor is associated with the core the holoenzyme is formed, which can initiate transcription. Mg(2+) is required as a cofactor. It depends on Zn(2+) as a cofactor.

The catalysed reaction is RNA(n) + a ribonucleoside 5'-triphosphate = RNA(n+1) + diphosphate. Functionally, DNA-dependent RNA polymerase catalyzes the transcription of DNA into RNA using the four ribonucleoside triphosphates as substrates. The chain is DNA-directed RNA polymerase subunit beta' from Clostridioides difficile (strain 630) (Peptoclostridium difficile).